The following is a 501-amino-acid chain: Cytochrome P450 90A4 (501 aa).

The helical transmembrane segment at 2 to 22 threads the bilayer; the sequence is AAAALLLLAAAAAAVVVAMAL. Heme is bound at residue C446.

It belongs to the cytochrome P450 family. It depends on heme as a cofactor.

It is found in the membrane. It functions in the pathway plant hormone biosynthesis; brassinosteroid biosynthesis. In terms of biological role, catalyzes the C23-alpha-hydroxylation step in brassinosteroid biosynthesis. Converts 6-deoxocathasterone to 6-deoxoteasterone in the late C6-oxidation pathway and cathasterone to teasterone (TE) in the early C6-oxidation pathway of brassinolide (BL) biosynthesis. This Oryza sativa subsp. indica (Rice) protein is Cytochrome P450 90A4.